Reading from the N-terminus, the 568-residue chain is Zinc finger protein 76 (568 aa).

Residue Lys-24 forms a Glycyl lysine isopeptide (Lys-Gly) (interchain with G-Cter in SUMO2) linkage. 3 repeat units span residues 34-45 (IQLEDGTTAYIH), 62-73 (VQLEDGSMAYIH), and 88-99 (VQLEDGSTAYIH). The interval 34–99 (IQLEDGTTAY…LEDGSTAYIH (66 aa)) is 3 X 12 AA approximate repeats. C2H2-type zinc fingers lie at residues 165–189 (FRCG…ERAH), 195–219 (YRCD…VRTH), 225–249 (YKCP…VRTH), 255–279 (FRCP…VRTH), 285–309 (YTCP…VRIH), 315–339 (YVCT…HVVH), and 345–368 (YTCS…RSAH). Positions 365–401 (RSAHGELEATEESEQALYEQQQLEAASAAEESPSPKP) are disordered. A compositionally biased stretch (low complexity) spans 379–396 (QALYEQQQLEAASAAEES).

The protein belongs to the krueppel C2H2-type zinc-finger protein family.

The protein resides in the nucleus. In terms of biological role, may be involved in transcriptional regulation. The polypeptide is Zinc finger protein 76 (Znf76) (Rattus norvegicus (Rat)).